A 240-amino-acid polypeptide reads, in one-letter code: Probable transcriptional regulatory protein PBPRB1582 (240 aa).

The protein belongs to the TACO1 family.

The protein resides in the cytoplasm. The polypeptide is Probable transcriptional regulatory protein PBPRB1582 (Photobacterium profundum (strain SS9)).